Reading from the N-terminus, the 457-residue chain is MQKYTSEARQLLALAIPVILAQVAQTAMGFVDTVMAGGYSATDMAAVAIGTSIWLPAILFGHGLLLALTPVIAQLNGSGRRERIAHQVRQGFWLAGFVSVLVMIVLWNAGYIIRSMHNIDPALADKAVGYLRALLWGAPGYLFFQVARNQCEGLAKTKPGMVMGFLGLLVNIPVNYIFIYGHFGMPELGGIGCGVATAAVYWVMFIAMLSYIKHARSMRDIRNETGFGKPDSVVMKRLIQLGLPIALALFFEVTLFAVVALLVSPLGIVDVAGHQIALNFSSLMFVLPMSLAAAVTIRVGYRLGQGSTLDAQTAARTGLGVGICMAVVTAIFTVTLRKHIALLYNDNPEVVALAAQLMLLAAVYQISDSIQVIGSGILRGYKDTRSIFFITFTAYWVLGLPSGYILALTDLVVDRMGPAGFWMGFIIGLTSAAVLMMLRMRYLQRQPSAIILQRAAR.

12 helical membrane-spanning segments follow: residues 11-31 (LLAL…MGFV), 53-73 (IWLP…PVIA), 93-113 (WLAG…GYII), 127-147 (AVGY…FQVA), 160-180 (GMVM…IFIY), 188-208 (LGGI…FIAM), 243-263 (LPIA…ALLV), 276-296 (IALN…AAVT), 314-334 (AART…IFTV), 350-370 (VVAL…SDSI), 387-407 (IFFI…YILA), and 418-438 (PAGF…LMML).

This sequence belongs to the multi antimicrobial extrusion (MATE) (TC 2.A.66.1) family. MdtK subfamily.

It is found in the cell inner membrane. Its function is as follows. Multidrug efflux pump that functions probably as a Na(+)/drug antiporter. The polypeptide is Multidrug resistance protein MdtK (Salmonella agona (strain SL483)).